The primary structure comprises 301 residues: UDP-3-O-acyl-N-acetylglucosamine deacetylase (301 aa).

3 residues coordinate Zn(2+): histidine 75, histidine 233, and aspartate 237. Histidine 260 serves as the catalytic Proton donor.

The protein belongs to the LpxC family. Requires Zn(2+) as cofactor.

It catalyses the reaction a UDP-3-O-[(3R)-3-hydroxyacyl]-N-acetyl-alpha-D-glucosamine + H2O = a UDP-3-O-[(3R)-3-hydroxyacyl]-alpha-D-glucosamine + acetate. It participates in glycolipid biosynthesis; lipid IV(A) biosynthesis; lipid IV(A) from (3R)-3-hydroxytetradecanoyl-[acyl-carrier-protein] and UDP-N-acetyl-alpha-D-glucosamine: step 2/6. Functionally, catalyzes the hydrolysis of UDP-3-O-myristoyl-N-acetylglucosamine to form UDP-3-O-myristoylglucosamine and acetate, the committed step in lipid A biosynthesis. The polypeptide is UDP-3-O-acyl-N-acetylglucosamine deacetylase (Aliarcobacter butzleri (strain RM4018) (Arcobacter butzleri)).